We begin with the raw amino-acid sequence, 664 residues long: Protein IQ-DOMAIN 28 (664 aa).

Residues 1 to 85 (MGKTPGKWIK…DESKDNLESR (85 aa)) form a disordered region. Over residues 51–64 (VDPPVVSSQPVPAS) the composition is skewed to low complexity. Basic and acidic residues predominate over residues 76–85 (DESKDNLESR). IQ domains are found at residues 93–121 (LEQA…GIIR), 122–140 (LQAV…ATYS), and 144–170 (GIVK…QKKH). Residues 106–116 (AHQARRAFRTL) are calmodulin-binding. Disordered regions lie at residues 244–488 (EIPK…KEKD), 502–573 (DEKS…SGRK), and 637–664 (AKGS…DWKR). The Nuclear localization signal 1 motif lies at 251-258 (KKRNYQAV). Positions 305 to 315 (DPLRNESDKAN) are enriched in basic and acidic residues. Positions 339 to 353 (SPSLKRSSLSNGSKK) are enriched in low complexity. The short motif at 351-358 (SKKATLRS) is the Nuclear localization signal 2 element. Basic and acidic residues-rich tracts occupy residues 358–367 (SAEKKKKDIP), 427–447 (TEKE…KVLE), and 502–532 (DEKS…KCAD). The segment covering 536 to 547 (SSENGNVGSDNT) has biased composition (polar residues). Basic and acidic residues predominate over residues 652–664 (DITHKSTRTDWKR).

It belongs to the IQD family. As to quaternary structure, binds to multiple calmodulin (CaM) in the presence of Ca(2+) and CaM-like proteins.

The protein resides in the nucleus. The protein localises to the cytoplasm. It localises to the cytoskeleton. Functionally, may be involved in cooperative interactions with calmodulins or calmodulin-like proteins. Recruits calmodulin proteins to microtubules, thus being a potential scaffold in cellular signaling and trafficking. May associate with nucleic acids and regulate gene expression at the transcriptional or post-transcriptional level. This Arabidopsis thaliana (Mouse-ear cress) protein is Protein IQ-DOMAIN 28.